The chain runs to 439 residues: Putrescine transporter PotE (439 aa).

A run of 12 helical transmembrane segments spans residues glycine 10 to leucine 30, isoleucine 40 to alanine 60, threonine 91 to glycine 111, leucine 114 to isoleucine 134, isoleucine 152 to phenylalanine 172, alanine 186 to leucine 206, isoleucine 225 to isoleucine 245, valine 276 to isoleucine 296, alanine 321 to isoleucine 341, asparagine 354 to isoleucine 374, valine 387 to glycine 407, and alanine 410 to proline 430.

The protein belongs to the amino acid-polyamine-organocation (APC) superfamily. Basic amino acid/polyamine antiporter (APA) (TC 2.A.3.2) family.

It localises to the cell inner membrane. The enzyme catalyses putrescine(in) + H(+)(in) = putrescine(out) + H(+)(out). The catalysed reaction is putrescine(in) + L-ornithine(out) = putrescine(out) + L-ornithine(in). Catalyzes both the uptake and excretion of putrescine. The uptake of putrescine is dependent on the membrane potential and the excretion involves putrescine-ornithine antiporter activity. The protein is Putrescine transporter PotE of Escherichia coli O6:H1 (strain CFT073 / ATCC 700928 / UPEC).